Consider the following 131-residue polypeptide: Profilin-4 (131 aa).

Cys13 and Cys115 are disulfide-bonded. The Involved in PIP2 interaction motif lies at 81–97; that stretch reads AVIRGKKGAGGITVKKT. Thr111 bears the Phosphothreonine mark.

It belongs to the profilin family. In terms of assembly, occurs in many kinds of cells as a complex with monomeric actin in a 1:1 ratio. Phosphorylated by MAP kinases.

The protein resides in the cytoplasm. It is found in the cytoskeleton. Binds to actin and affects the structure of the cytoskeleton. At high concentrations, profilin prevents the polymerization of actin, whereas it enhances it at low concentrations. The polypeptide is Profilin-4 (Olea europaea (Common olive)).